The chain runs to 71 residues: ATP synthase F(0) complex subunit e, mitochondrial (71 aa).

An N6-acetyllysine modification is found at lysine 34.

It belongs to the ATPase e subunit family. As to quaternary structure, component of the ATP synthase complex composed at least of ATP5F1A/subunit alpha, ATP5F1B/subunit beta, ATP5MC1/subunit c (homooctomer), MT-ATP6/subunit a, MT-ATP8/subunit 8, ATP5ME/subunit e, ATP5MF/subunit f, ATP5MG/subunit g, ATP5MK/subunit k, ATP5MJ/subunit j, ATP5F1C/subunit gamma, ATP5F1D/subunit delta, ATP5F1E/subunit epsilon, ATP5PF/subunit F6, ATP5PB/subunit b, ATP5PD/subunit d, ATP5PO/subunit OSCP. ATP synthase complex consists of a soluble F(1) head domain (subunits alpha(3) and beta(3)) - the catalytic core - and a membrane F(0) domain - the membrane proton channel (subunits c, a, 8, e, f, g, k and j). These two domains are linked by a central stalk (subunits gamma, delta, and epsilon) rotating inside the F1 region and a stationary peripheral stalk (subunits F6, b, d, and OSCP).

It localises to the mitochondrion. It is found in the mitochondrion inner membrane. In terms of biological role, subunit e, of the mitochondrial membrane ATP synthase complex (F(1)F(0) ATP synthase or Complex V) that produces ATP from ADP in the presence of a proton gradient across the membrane which is generated by electron transport complexes of the respiratory chain. ATP synthase complex consist of a soluble F(1) head domain - the catalytic core - and a membrane F(1) domain - the membrane proton channel. These two domains are linked by a central stalk rotating inside the F(1) region and a stationary peripheral stalk. During catalysis, ATP synthesis in the catalytic domain of F(1) is coupled via a rotary mechanism of the central stalk subunits to proton translocation. In vivo, can only synthesize ATP although its ATP hydrolase activity can be activated artificially in vitro. Part of the complex F(0) domain. This chain is ATP synthase F(0) complex subunit e, mitochondrial, found in Bos taurus (Bovine).